Here is a 377-residue protein sequence, read N- to C-terminus: tRNA(Met) cytidine acetate ligase (377 aa).

Residues 7–20 (VTEY…HLYH), G100, N153, and R178 each bind ATP.

It belongs to the TmcAL family.

It is found in the cytoplasm. The catalysed reaction is cytidine(34) in elongator tRNA(Met) + acetate + ATP = N(4)-acetylcytidine(34) in elongator tRNA(Met) + AMP + diphosphate. Its function is as follows. Catalyzes the formation of N(4)-acetylcytidine (ac(4)C) at the wobble position of elongator tRNA(Met), using acetate and ATP as substrates. First activates an acetate ion to form acetyladenylate (Ac-AMP) and then transfers the acetyl group to tRNA to form ac(4)C34. The polypeptide is tRNA(Met) cytidine acetate ligase (Staphylococcus saprophyticus subsp. saprophyticus (strain ATCC 15305 / DSM 20229 / NCIMB 8711 / NCTC 7292 / S-41)).